Reading from the N-terminus, the 151-residue chain is Probable cGMP 3',5'-cyclic phosphodiesterase subunit delta (151 aa).

The protein belongs to the PDE6D/unc-119 family. Interacts with Pde6.

It is found in the nucleus. It localises to the cytoplasm. In Drosophila sechellia (Fruit fly), this protein is Probable cGMP 3',5'-cyclic phosphodiesterase subunit delta.